We begin with the raw amino-acid sequence, 793 residues long: WASP homolog-associated protein with actin, membranes and microtubules (793 aa).

Residues 1-253 (MDSEQPDSLD…EVATSCKLGI (253 aa)) form a mediates association with membranes region. The segment at 254–623 (LKSLDEDELG…FVPVSDQTLS (370 aa)) is mediates interaction with microtubules. 2 coiled-coil regions span residues 265–290 (RRVAALQKEASEWTRQAEEAVGSIQD) and 445–503 (LGDN…LHQH). Disordered regions lie at residues 556–661 (SMVS…SFQG) and 675–699 (EDRPLPLACDPSAGRPCDYQGPGSM). The segment covering 566 to 579 (SQKRLSTAHHHKTA) has biased composition (basic residues). The span at 618-628 (SDQTLSGSSED) shows a compositional bias: polar residues. Residues 624-793 (GSSEDLSLPP…DEPSPTEWDR (170 aa)) form a mediates actin nucleation region. Over residues 632 to 654 (PPQPPAPPLPPPPPPPPPPPLPP) the composition is skewed to pro residues. 2 WH2 domains span residues 698-716 (SMDEVLASLRQGKASLRKV) and 728-745 (VNEQVLAAIRQGVQLKKV). Positions 755–785 (KKSTSDLERSIREALERIKKVSADSEEDNDE) form a coiled coil. Residues 772 to 793 (IKKVSADSEEDNDEPSPTEWDR) are disordered. The span at 778 to 787 (DSEEDNDEPS) shows a compositional bias: acidic residues. Ser779 bears the Phosphoserine mark.

Interacts with ACTR3; indicative for an association with the ARP2/3 complex. Associates with microtubules; in vitro binds to tubulin heterodimer in a 1:1 stoichiometry; decorates microtubules with a repeat of 80 A along protofilaments. Interacts with RHOD (in GTP-bound form).

Its subcellular location is the cytoplasm. The protein localises to the endoplasmic reticulum-Golgi intermediate compartment. It is found in the cytoplasmic vesicle membrane. It localises to the golgi apparatus. The protein resides in the cis-Golgi network. Functionally, acts as a nucleation-promoting factor (NPF) that stimulates Arp2/3-mediated actin polymerization both at the Golgi apparatus and along tubular membranes. Involved as a regulator of Golgi positioning and morphology. Its activity in membrane tubulation requires F-actin and interaction with microtubules. Proposed to use coordinated actin-nucleating and microtubule-binding activities of distinct WHAMM molecules to drive membrane tubule elongation; when MT-bound can recruit and remodel membrane vesicles but is prevented to activate the Arp2/3 complex. Required for RhoD-dependent actin reorganization such as in cell adhesion and cell migration. Participates in vesicle transport between the endoplasmic reticulum and the Golgi complex. The chain is WASP homolog-associated protein with actin, membranes and microtubules (Whamm) from Mus musculus (Mouse).